The primary structure comprises 139 residues: Actin-depolymerizing factor 7 (139 aa).

The ADF-H domain maps to 7–139 (GMAVDDECKL…GLDVIRGRAN (133 aa)).

The protein belongs to the actin-binding proteins ADF family.

Its function is as follows. Actin-depolymerizing protein. Severs actin filaments (F-actin) and binds to actin monomers. The sequence is that of Actin-depolymerizing factor 7 (ADF7) from Oryza sativa subsp. japonica (Rice).